A 102-amino-acid chain; its full sequence is Small ribosomal subunit protein uS10 (102 aa).

The protein belongs to the universal ribosomal protein uS10 family. In terms of assembly, part of the 30S ribosomal subunit.

In terms of biological role, involved in the binding of tRNA to the ribosomes. This Clavibacter michiganensis subsp. michiganensis (strain NCPPB 382) protein is Small ribosomal subunit protein uS10.